Here is a 471-residue protein sequence, read N- to C-terminus: 6-phosphofructo-2-kinase/fructose-2,6-bisphosphatase 1 (471 aa).

Serine 2 is subject to N-acetylserine. Residues 2 to 250 (SREMGELTQT…AYYLMNIHVT (249 aa)) form a 6-phosphofructo-2-kinase region. Serine 33 bears the Phosphoserine; by PKA mark. Residue 49 to 57 (GLPARGKTY) participates in ATP binding. Beta-D-fructose 6-phosphate is bound by residues arginine 82 and arginine 105. Residue aspartate 131 is part of the active site. Threonine 133 and arginine 139 together coordinate beta-D-fructose 6-phosphate. Serine 141 bears the Phosphoserine mark. The active site involves cysteine 161. 170 to 175 (NIKQVK) serves as a coordination point for ATP. Residues lysine 175, arginine 196, and tyrosine 200 each contribute to the beta-D-fructose 6-phosphate site. The interval 251–471 (PRSIYLCRHG…EALDTVPAHY (221 aa)) is fructose-2,6-bisphosphatase. Arginine 258 contacts beta-D-fructose 2,6-bisphosphate. The active-site Tele-phosphohistidine intermediate is the histidine 259. Residues asparagine 265, glycine 271, and arginine 308 each coordinate beta-D-fructose 2,6-bisphosphate. The active-site Proton donor/acceptor is glutamate 328. The beta-D-fructose 2,6-bisphosphate site is built by tyrosine 339, arginine 353, lysine 357, tyrosine 368, glutamine 394, and arginine 398. 350-353 (FALR) serves as a coordination point for ATP. Residues 394 to 398 (QAVMR) and tyrosine 430 contribute to the ATP site.

In the C-terminal section; belongs to the phosphoglycerate mutase family. In terms of assembly, homodimer. Liver.

It catalyses the reaction beta-D-fructose 2,6-bisphosphate + H2O = beta-D-fructose 6-phosphate + phosphate. The enzyme catalyses beta-D-fructose 6-phosphate + ATP = beta-D-fructose 2,6-bisphosphate + ADP + H(+). Phosphorylation at Ser-33 inhibits the kinase and activates the bisphosphatase. Synthesis and degradation of fructose 2,6-bisphosphate. The chain is 6-phosphofructo-2-kinase/fructose-2,6-bisphosphatase 1 from Mus musculus (Mouse).